The sequence spans 1037 residues: Receptor kinase-like protein Xa21 (1037 aa).

The first 24 residues, 1 to 24 (MARSPTSVMISSLLLLLLIGPASS), serve as a signal peptide directing secretion. The Extracellular portion of the chain corresponds to 25–665 (DDAAAAAAAR…LLENRKHFPV (641 aa)). Residues N66, N101, and N112 are each glycosylated (N-linked (GlcNAc...) asparagine). 11 LRR repeats span residues 89–112 (PHRV…SLGN), 113–137 (LSFL…LSRL), 138–161 (SRLQ…IGAC), 163–185 (KLTS…IGAS), 187–210 (KHLS…LGNL), 211–234 (TSLQ…LGQL), 236–259 (SSLL…IWNL), 260–283 (SSLR…AFKT), 285–308 (HLLE…VANA), 310–331 (HLTQ…GFGR), and 333–355 (RNLT…DWGF). N209 carries N-linked (GlcNAc...) asparagine glycosylation. N-linked (GlcNAc...) asparagine glycosylation is found at N247 and N258. A glycan (N-linked (GlcNAc...) asparagine) is linked at N307. 3 N-linked (GlcNAc...) asparagine glycosylation sites follow: N334, N361, and N385. LRR repeat units follow at residues 362 to 385 (CSKL…SFSN), 387 to 411 (STSL…IGNL), 412 to 435 (IGLQ…LGRL), 437 to 459 (NLGI…IGNL), 460 to 482 (TELN…TLSN), 483 to 507 (LTNL…LFNI), 509 to 532 (TLSI…IGHL), 533 to 556 (KNLV…LGDC), 557 to 580 (QLLR…LGQL), 581 to 604 (KGLE…LADI), and 606 to 629 (MLHS…AFAD). 5 N-linked (GlcNAc...) asparagine glycosylation sites follow: N447, N458, N482, N495, and N515. N-linked (GlcNAc...) asparagine glycans are attached at residues N592 and N611. Residues 666-686 (LPISVSLVAALAILSSLYLLI) form a helical membrane-spanning segment. Residues 687–1037 (TWHKRTKKGA…PVCEGASLEF (351 aa)) lie on the Cytoplasmic side of the membrane. A Nuclear localization signal motif is present at residues 689-694 (HKRTKK). S698 carries the phosphoserine modification. Residue T700 is modified to Phosphothreonine. S701 bears the Phosphoserine mark. T717 is modified (phosphothreonine). Residues 720–1019 (FAPTNLLGSG…GDIIDELNAI (300 aa)) enclose the Protein kinase domain. ATP-binding positions include 726–734 (LGSGSFGSV) and K748. The Proton acceptor role is filled by D854.

This sequence belongs to the protein kinase superfamily. Ser/Thr protein kinase family. Interacts with WRKY62/XB10 in the nucleus. Interacts with SERK2. Requires Mn(2+) as cofactor. Mg(2+) is required as a cofactor. Post-translationally, undergoes protein cleavage upon X.oryzae pv. oryzae protein Ax21 detection, thus releasing the processed protein kinase Xa21 chain. Autophosphorylated on serine and threonine residues; these phosphorylation prevents proteolytic degradation.

It localises to the cell membrane. Its subcellular location is the endoplasmic reticulum membrane. It is found in the nucleus. The catalysed reaction is L-seryl-[protein] + ATP = O-phospho-L-seryl-[protein] + ADP + H(+). The enzyme catalyses L-threonyl-[protein] + ATP = O-phospho-L-threonyl-[protein] + ADP + H(+). Its function is as follows. Receptor kinase that detects X.oryzae pv. oryzae protein Ax21 to promote innate immunity. Following X.oryzae pv. oryzae protein Ax21 detection, undergoes cleavage, releasing the processed protein kinase Xa21 chain. Functionally, the processed protein kinase Xa21 chain released by protein cleavage after X.oryzae pv. oryzae protein Ax21 detection translocates into the nucleus where it can bind and regulate WRKY62, a transcription factor. Confers resistance to the bacterial pathogen X.oryzae pv. oryzae (Xoo). The protein is Receptor kinase-like protein Xa21 of Oryza sativa subsp. japonica (Rice).